The sequence spans 266 residues: Indole-3-glycerol phosphate synthase (266 aa).

Belongs to the TrpC family.

The catalysed reaction is 1-(2-carboxyphenylamino)-1-deoxy-D-ribulose 5-phosphate + H(+) = (1S,2R)-1-C-(indol-3-yl)glycerol 3-phosphate + CO2 + H2O. The protein operates within amino-acid biosynthesis; L-tryptophan biosynthesis; L-tryptophan from chorismate: step 4/5. The sequence is that of Indole-3-glycerol phosphate synthase from Herminiimonas arsenicoxydans.